We begin with the raw amino-acid sequence, 116 residues long: Large ribosomal subunit protein bL20 (116 aa).

Belongs to the bacterial ribosomal protein bL20 family.

Its function is as follows. Binds directly to 23S ribosomal RNA and is necessary for the in vitro assembly process of the 50S ribosomal subunit. It is not involved in the protein synthesizing functions of that subunit. The protein is Large ribosomal subunit protein bL20 of Thermosynechococcus vestitus (strain NIES-2133 / IAM M-273 / BP-1).